Reading from the N-terminus, the 207-residue chain is MIHIINHPLIEIKLTVMRDEKTNHKDFKANLNEISSLMVYEILRDYKAKDFQVKTSTGSLANGKIFDKEIVIVPILRAGLGMTDGISNLVPQARIGHIGLYRDEKTFEAKEYFYKIPDVKKDSLILVVDPMLATGGSANDAIKSLKKRGFSNIKLVCLVGVKDGIDLIEKNHPDVNVYLAAKDDHLDKNKYIIPGLGDAGDRIFGTK.

Residues Arg77, Arg102, and 129-137 (DPMLATGGS) contribute to the 5-phospho-alpha-D-ribose 1-diphosphate site. Residues Ile192 and 197 to 199 (GDA) contribute to the uracil site. Asp198 provides a ligand contact to 5-phospho-alpha-D-ribose 1-diphosphate.

Belongs to the UPRTase family. Mg(2+) serves as cofactor.

It catalyses the reaction UMP + diphosphate = 5-phospho-alpha-D-ribose 1-diphosphate + uracil. It participates in pyrimidine metabolism; UMP biosynthesis via salvage pathway; UMP from uracil: step 1/1. With respect to regulation, allosterically activated by GTP. Catalyzes the conversion of uracil and 5-phospho-alpha-D-ribose 1-diphosphate (PRPP) to UMP and diphosphate. The polypeptide is Uracil phosphoribosyltransferase (Mycoplasma mobile (strain ATCC 43663 / 163K / NCTC 11711) (Mesomycoplasma mobile)).